The primary structure comprises 428 residues: Serine--tRNA ligase (428 aa).

231–233 (TAE) is an L-serine binding site. 262-264 (RAE) is an ATP binding site. Position 285 (Glu-285) interacts with L-serine. 349–352 (EISS) provides a ligand contact to ATP. Residue Ser-385 coordinates L-serine.

Belongs to the class-II aminoacyl-tRNA synthetase family. Type-1 seryl-tRNA synthetase subfamily. Homodimer. The tRNA molecule binds across the dimer.

The protein resides in the cytoplasm. The catalysed reaction is tRNA(Ser) + L-serine + ATP = L-seryl-tRNA(Ser) + AMP + diphosphate + H(+). The enzyme catalyses tRNA(Sec) + L-serine + ATP = L-seryl-tRNA(Sec) + AMP + diphosphate + H(+). The protein operates within aminoacyl-tRNA biosynthesis; selenocysteinyl-tRNA(Sec) biosynthesis; L-seryl-tRNA(Sec) from L-serine and tRNA(Sec): step 1/1. Catalyzes the attachment of serine to tRNA(Ser). Is also able to aminoacylate tRNA(Sec) with serine, to form the misacylated tRNA L-seryl-tRNA(Sec), which will be further converted into selenocysteinyl-tRNA(Sec). The sequence is that of Serine--tRNA ligase from Methylorubrum extorquens (strain CM4 / NCIMB 13688) (Methylobacterium extorquens).